The chain runs to 295 residues: Bifunctional protein FolD (295 aa).

NADP(+)-binding positions include 166–168 (GRS), Thr195, and Val236.

The protein belongs to the tetrahydrofolate dehydrogenase/cyclohydrolase family. Homodimer.

The enzyme catalyses (6R)-5,10-methylene-5,6,7,8-tetrahydrofolate + NADP(+) = (6R)-5,10-methenyltetrahydrofolate + NADPH. The catalysed reaction is (6R)-5,10-methenyltetrahydrofolate + H2O = (6R)-10-formyltetrahydrofolate + H(+). It participates in one-carbon metabolism; tetrahydrofolate interconversion. Functionally, catalyzes the oxidation of 5,10-methylenetetrahydrofolate to 5,10-methenyltetrahydrofolate and then the hydrolysis of 5,10-methenyltetrahydrofolate to 10-formyltetrahydrofolate. The protein is Bifunctional protein FolD of Syntrophobacter fumaroxidans (strain DSM 10017 / MPOB).